The chain runs to 197 residues: MAKVQVLNVAVLDNPSPFGNPFQFEITFECMEDLPEDLEWKIIYVGSAESEEYDQILDSVLVGPVPAGRHMFVFQADAPNTGLIPESDAVGVTVVLITCTYRGQEFIRIGYYVNNEYTDPELRENPPVKPDYTQLQRNILASNPRVTRFHINWEATMDKMEDSENVDPAPNAMLPPTCMPGKAPPLGLMPDNSMDCL.

This sequence belongs to the ASF1 family. As to quaternary structure, interacts with histone H3 and histone H4.

The protein resides in the nucleus. Histone chaperone that facilitates histone deposition and histone exchange and removal during nucleosome assembly and disassembly. The chain is Histone chaperone asf1b-B (asf1bb) from Danio rerio (Zebrafish).